The primary structure comprises 30 residues: Photosystem II reaction center protein Psb30 (30 aa).

At 1-6 the chain is on the lumenal side; it reads EVIAQL. The chain crosses the membrane as a helical span at residues 7–21; it reads TMIAMIGIAGPMIIF. The Cytoplasmic portion of the chain corresponds to 22 to 30; the sequence is LLAVRRGNL.

This sequence belongs to the Psb30/Ycf12 family. PSII is composed of 1 copy each of membrane proteins PsbA, PsbB, PsbC, PsbD, PsbE, PsbF, PsbH, PsbI, PsbJ, PsbK, PsbL, PsbM, PsbT, PsbX, PsbY, PsbZ, Psb30/Ycf12, peripheral proteins PsbO, CyanoQ (PsbQ), PsbU, PsbV and a large number of cofactors. It forms dimeric complexes. It depends on PSII binds multiple chlorophylls, carotenoids and specific lipids. as a cofactor.

The protein resides in the cellular thylakoid membrane. A core subunit of photosystem II (PSII), probably helps stabilize the reaction center. PSII is a light-driven water plastoquinone oxidoreductase, using light energy to abstract electrons from H(2)O, generating a proton gradient subsequently used for ATP formation. The sequence is that of Photosystem II reaction center protein Psb30 from Thermostichus vulcanus (Synechococcus vulcanus).